We begin with the raw amino-acid sequence, 258 residues long: Ribosomal RNA small subunit methyltransferase J (258 aa).

S-adenosyl-L-methionine is bound by residues 123–124 and Asp-177; that span reads ER. Residues 232-258 form a disordered region; sequence IDGPKPSHSLEGKSSRYDIYPKKALKA. Basic and acidic residues predominate over residues 239–252; it reads HSLEGKSSRYDIYP.

This sequence belongs to the methyltransferase superfamily. RsmJ family.

It is found in the cytoplasm. The enzyme catalyses guanosine(1516) in 16S rRNA + S-adenosyl-L-methionine = N(2)-methylguanosine(1516) in 16S rRNA + S-adenosyl-L-homocysteine + H(+). Its function is as follows. Specifically methylates the guanosine in position 1516 of 16S rRNA. The chain is Ribosomal RNA small subunit methyltransferase J from Pseudomonas putida (strain W619).